A 435-amino-acid chain; its full sequence is Xylose isomerase (435 aa).

Residues H100 and D103 contribute to the active site. Residues E231, E267, H270, D295, D306, D308, and D338 each contribute to the Mg(2+) site.

It belongs to the xylose isomerase family. As to quaternary structure, homotetramer. Mg(2+) is required as a cofactor.

It localises to the cytoplasm. It carries out the reaction alpha-D-xylose = alpha-D-xylulofuranose. The sequence is that of Xylose isomerase from Brucella canis (strain ATCC 23365 / NCTC 10854 / RM-666).